A 201-amino-acid chain; its full sequence is 3-isopropylmalate dehydratase small subunit (201 aa).

Belongs to the LeuD family. LeuD type 1 subfamily. Heterodimer of LeuC and LeuD.

It carries out the reaction (2R,3S)-3-isopropylmalate = (2S)-2-isopropylmalate. Its pathway is amino-acid biosynthesis; L-leucine biosynthesis; L-leucine from 3-methyl-2-oxobutanoate: step 2/4. Functionally, catalyzes the isomerization between 2-isopropylmalate and 3-isopropylmalate, via the formation of 2-isopropylmaleate. The sequence is that of 3-isopropylmalate dehydratase small subunit from Salmonella schwarzengrund (strain CVM19633).